Reading from the N-terminus, the 176-residue chain is Cytochrome c oxidase subunit 5b-1, mitochondrial (176 aa).

A mitochondrion-targeting transit peptide spans 1 to 55 (MWRRIVSSQLKTLAADVVAASPRRSIAATTRPVGFYLAANRSAISASSFVIPRRF). The Zn(2+) site is built by Cys122, Cys146, and Cys149. Positions 157–176 (VVGPGGPPDGHGDEDDEHHH) are disordered.

This sequence belongs to the cytochrome c oxidase subunit 5B (TC 3.D.4.11) family.

Its subcellular location is the mitochondrion inner membrane. Its function is as follows. This protein is one of the nuclear-coded polypeptide chains of cytochrome c oxidase, the terminal oxidase in mitochondrial electron transport. In Arabidopsis thaliana (Mouse-ear cress), this protein is Cytochrome c oxidase subunit 5b-1, mitochondrial (COX5B-1).